The chain runs to 216 residues: Cytochrome c biogenesis ATP-binding export protein CcmA (216 aa).

One can recognise an ABC transporter domain in the interval 18–216 (LQVEGLAGRR…AHARTLEISA (199 aa)). Residue 50–57 (GHNGSGKT) participates in ATP binding.

It belongs to the ABC transporter superfamily. CcmA exporter (TC 3.A.1.107) family. As to quaternary structure, the complex is composed of two ATP-binding proteins (CcmA) and two transmembrane proteins (CcmB).

It is found in the cell inner membrane. The catalysed reaction is heme b(in) + ATP + H2O = heme b(out) + ADP + phosphate + H(+). In terms of biological role, part of the ABC transporter complex CcmAB involved in the biogenesis of c-type cytochromes; once thought to export heme, this seems not to be the case, but its exact role is uncertain. Responsible for energy coupling to the transport system. In Nitrosococcus oceani (strain ATCC 19707 / BCRC 17464 / JCM 30415 / NCIMB 11848 / C-107), this protein is Cytochrome c biogenesis ATP-binding export protein CcmA.